Consider the following 529-residue polypeptide: Protein FLOURY ENDOSPERM 6, chloroplastic (529 aa).

Disordered stretches follow at residues 1 to 22, 39 to 77, and 166 to 275; these read MLPL…PTLT, AAPH…NAAR, and QGAV…HNKS. The N-terminal 71 residues, 1–71, are a transit peptide targeting the chloroplast; the sequence is MLPLLLPLPV…QTRAPRRTLS (71 aa). The segment covering 9-18 has biased composition (pro residues); it reads PVTPPPPLPS. The segment covering 41-57 has biased composition (basic residues); sequence PHHHHHHRRRRVYRRQR. Residues 400–452 are a coiled coil; the sequence is VMQAQEELRSIRAKIAVLEGKMALEIIEKNKIIEEKQRRLDEAEKALSELRTV.

In terms of assembly, interacts with SKIPA. Interacts with ISA1. Expressed in leaves, stems and panicles. Expressed at lower levels in roots and developing seeds.

The protein resides in the plastid. The protein localises to the chloroplast. Its function is as follows. Involved in compound starch granule formation and starch synthesis in endosperm. May act as a regulatory scaffolding protein and affect starch synthesis and compound starch granule formation through direct interaction with isoamylase 1 (ISA1). Binds starch, amylopectin and amylose through its C-terminal carbohydrate-binding domain (CBM) in vitro. The polypeptide is Protein FLOURY ENDOSPERM 6, chloroplastic (Oryza sativa subsp. japonica (Rice)).